The primary structure comprises 335 residues: Beta-hexosaminidase (335 aa).

Residues Asp-60, Arg-68, Arg-133, and 163-164 (KH) each bind substrate. His-176 (proton donor/acceptor) is an active-site residue. Residue Asp-247 is the Nucleophile of the active site.

It belongs to the glycosyl hydrolase 3 family. NagZ subfamily.

Its subcellular location is the cytoplasm. It carries out the reaction Hydrolysis of terminal non-reducing N-acetyl-D-hexosamine residues in N-acetyl-beta-D-hexosaminides.. It functions in the pathway cell wall biogenesis; peptidoglycan recycling. Plays a role in peptidoglycan recycling by cleaving the terminal beta-1,4-linked N-acetylglucosamine (GlcNAc) from peptide-linked peptidoglycan fragments, giving rise to free GlcNAc, anhydro-N-acetylmuramic acid and anhydro-N-acetylmuramic acid-linked peptides. The polypeptide is Beta-hexosaminidase (Xylella fastidiosa (strain M23)).